Here is a 537-residue protein sequence, read N- to C-terminus: Sodium/hydrogen exchanger 9B2 (537 aa).

Residues 1–10 show a composition bias toward basic and acidic residues; it reads MGDEDKRITY. Positions 1–28 are disordered; the sequence is MGDEDKRITYEDSEPSTGMNYTPSMHQE. Topologically, residues 1-86 are cytoplasmic; sequence MGDEDKRITY…ACPPHGLLDR (86 aa). Positions 15-27 are enriched in polar residues; the sequence is PSTGMNYTPSMHQ. At serine 49 the chain carries Phosphoserine. A helical membrane pass occupies residues 87–104; it reads VITNVTIIVLLWAVVWSI. Topologically, residues 105 to 113 are extracellular; it reads TGSECLPGG. A helical membrane pass occupies residues 114-133; it reads NLFGIIILFYCAIIGGKLLG. At 134 to 144 the chain is on the cytoplasmic side; sequence LIKLPTLPPLP. A helical transmembrane segment spans residues 145 to 161; the sequence is SLLGMLLAGFLIRNIPV. Residues 162 to 171 are Extracellular-facing; it reads INDNVQIKHK. A helical transmembrane segment spans residues 172–189; it reads WSSSLRSIALSIILVRAG. Over 190–200 the chain is Cytoplasmic; sequence LGLDSKALKKL. Residues 201-227 form a helical membrane-spanning segment; it reads KGVCVRLSMGPCIVEACTSALLAHYLL. The Extracellular segment spans residues 228-233; that stretch reads GLPWQW. The helical transmembrane segment at 234 to 242 threads the bilayer; sequence GFILGFVLG. The Cytoplasmic portion of the chain corresponds to 243-270; it reads AVSPAVVVPSMLLLQGGGYGVEKGVPTL. 4 residues coordinate Na(+): valine 244, glycine 275, aspartate 278, and aspartate 279. Residues 271 to 290 traverse the membrane as a helical segment; sequence LMAAGSFDDILAITGFNTCL. Residues 291 to 300 are Extracellular-facing; it reads GIAFSTGSTV. Residues 301–324 form a helical membrane-spanning segment; that stretch reads FNVLRGVLEVVIGVATGSVLGFFI. Residues 325-339 lie on the Cytoplasmic side of the membrane; the sequence is QYFPSRDQDKLVCKR. A helical membrane pass occupies residues 340-357; that stretch reads TFLVLGLSVLAVFSSVHF. At 358–361 the chain is on the extracellular side; it reads GFPG. Residues 362-373 form a helical membrane-spanning segment; sequence SGGLCTLVMAFL. The Cytoplasmic segment spans residues 374 to 390; it reads AGMGWTSEKAEVEKIIA. A helical transmembrane segment spans residues 391–411; the sequence is VAWDIFQPLLFGLIGAEVSIA. Over 412 to 417 the chain is Extracellular; sequence SLRPET. Residues 418 to 440 traverse the membrane as a helical segment; it reads VGLCVATVGIAVLIRILTTFLMV. The Cytoplasmic portion of the chain corresponds to 441–461; that stretch reads CFAGFNLKEKIFISFAWLPKA. A helical transmembrane segment spans residues 462–473; the sequence is TVQAAIGSVALD. Topologically, residues 474 to 486 are extracellular; that stretch reads TARSHGEKQLEDY. A helical transmembrane segment spans residues 487–509; that stretch reads GMDVLTVAFLSILITAPIGSLLI. Residues 510–537 are Cytoplasmic-facing; it reads GLLGPRLLQKVEHQNKDEEVQGETSVQV.

Belongs to the monovalent cation:proton antiporter 1 (CPA1) transporter (TC 2.A.36) family. Homodimer. Dimerization is essential for SLC9B2 activity. Lipids seem to play a role in the stabilization of the dimerization subdomain. As to expression, widely expressed. High levels detected in the distal tubules of the kidney nephron. Detected in red blood cells (at protein level).

It localises to the cell membrane. Its subcellular location is the mitochondrion membrane. The protein localises to the endosome membrane. It is found in the recycling endosome membrane. The protein resides in the cytoplasmic vesicle. It localises to the secretory vesicle. Its subcellular location is the synaptic vesicle membrane. The protein localises to the cell projection. It is found in the cilium. The protein resides in the flagellum membrane. It localises to the basolateral cell membrane. Its subcellular location is the apical cell membrane. It carries out the reaction Li(+)(out) + H(+)(in) = Li(+)(in) + H(+)(out). It catalyses the reaction Li(+)(in) + Na(+)(out) = Li(+)(out) + Na(+)(in). The enzyme catalyses Na(+)(in) + H(+)(out) = Na(+)(out) + H(+)(in). Allosterically inhibited by the N-terminal domain. Inhibited by phloretin. In terms of biological role, electroneutral Na(+) Li(+)/H(+) antiporter that extrudes Na(+) or Li(+) in exchange for external protons across the membrane. Uses the proton gradient/membrane potential to extrude sodium. Contributes to the regulation of intracellular pH and sodium homeostasis. Also able to mediate Na(+)/Li(+) antiporter activity in kidney. May play a physiological role in renal tubular function and blood pressure homeostasis. Plays an important role for insulin secretion and clathrin-mediated endocytosis in beta-cells. Involved in sperm motility and fertility. It is controversial whether SLC9B2 plays a role in osteoclast differentiation or not. The chain is Sodium/hydrogen exchanger 9B2 from Homo sapiens (Human).